The primary structure comprises 97 residues: Mapk-regulated corepressor-interacting protein 1 (97 aa).

The interval 1-30 (MTSSPVSRVVYNGKRTSSPRSPPSSSEIFT) is disordered. Phosphoserine is present on residues Ser21 and Ser24. Position 30 is a phosphothreonine (Thr30). Position 41 is a phosphotyrosine (Tyr41). N6-acetyllysine is present on Lys79. Residues 80 to 84 (PIDLS) carry the PXDLS motif motif.

This sequence belongs to the MCRIP family. Interacts (unphosphorylated form, via the PXDLS motif) with CTBP1, competitively inhibiting CTBP-ZEB1 interaction. Interacts with CTBP2. Interacts with MCRIP2. Interacts with DDX6. Phosphorylation by MAPK3/1 (ERK1/2) regulates MCRIP1 binding to CTBP(s).

It localises to the nucleus. Its subcellular location is the cytoplasm. It is found in the stress granule. Its function is as follows. The phosphorylation status of MCRIP1 functions as a molecular switch to regulate epithelial-mesenchymal transition. Unphosphorylated MCRIP1 binds to and inhibits the transcriptional corepressor CTBP(s). When phosphorylated by MAPK/ERK, MCRIP1 releases CTBP(s) resulting in transcriptional silencing of the E-cadherin gene and induction of epithelial-mesenchymal transition. This Homo sapiens (Human) protein is Mapk-regulated corepressor-interacting protein 1.